The following is a 257-amino-acid chain: Short-chain dehydrogenase reductase 3b (257 aa).

An NAD(+)-binding site is contributed by 12 to 36; it reads IITGGASGIGAESVRLFTEHGARVV. Ser144 is a binding site for substrate. Tyr157 functions as the Proton acceptor in the catalytic mechanism.

It belongs to the short-chain dehydrogenases/reductases (SDR) family.

This is Short-chain dehydrogenase reductase 3b (SDR3b) from Arabidopsis thaliana (Mouse-ear cress).